The following is a 551-amino-acid chain: MADGWDAEKIFNTTVFGFTYDDLILMPGHIDFGVNDVDLSTRITRNLHVRTPIVSSPMDTVTEHRMAIGCALMGGMGVIHNNMETARQVAEVQKVKRYENGFILDPFVLRPSDSVADVYRIKEKYGYSSVPITDTGMLGGKLLGIVTSRDIDFLTDVHTPLSEVMTSDLVVGHEPVQLAEANELLRESKKGKLPIVNDNFELVALISRNDLKKNREFPLASKDSNKQLLVGAAVSTKPHDIERAKALQEAGADVLVVDSSQGDSIYQVDLVKRLKAAFPELQIIGGNVVTARQAKSLIDAGVDGLRIGMGSGSICTTQVVCAVGRAQATAVYHVCKYAREHGDVPCIADGGIQNSGHVMKALALGANAVMMGSMLAGTEEAPGEYYFHNGVRVKTYRGMGSLDAMRAGTRRTASPPARGLRSPEASPSTAASSGGASRASALSEASPSAKSEASRTSTSTGSAARYFAENQTIRVAQGVSGCVVDKGTVMQLIPYVIQGVKHGMQDIGARTLRDLHAQLVGGELRFDVRSGAAQREGDVHDLHSFERKLYA.

CBS domains lie at 102 to 163 (FILD…PLSE) and 165 to 221 (MTSD…PLAS). NAD(+) contacts are provided by residues 258-260 (DSS) and 308-310 (GMG). Residues glycine 310 and glycine 312 each coordinate K(+). Serine 313 lines the IMP pocket. Cysteine 315 is a binding site for K(+). Cysteine 315 serves as the catalytic Thioimidate intermediate. IMP-binding positions include 349–351 (DGG), 372–373 (GS), and 396–400 (YRGMG). Residues 407–462 (AGTRRTASPPARGLRSPEASPSTAASSGGASRASALSEASPSAKSEASRTSTSTGS) are disordered. The span at 422–462 (SPEASPSTAASSGGASRASALSEASPSAKSEASRTSTSTGS) shows a compositional bias: low complexity. Catalysis depends on arginine 465, which acts as the Proton acceptor. Glutamine 477 is a binding site for IMP. Residues glutamate 536 and glycine 537 each contribute to the K(+) site.

This sequence belongs to the IMPDH/GMPR family. As to quaternary structure, homotetramer. It depends on K(+) as a cofactor.

It localises to the cytoplasm. The catalysed reaction is IMP + NAD(+) + H2O = XMP + NADH + H(+). It participates in purine metabolism; XMP biosynthesis via de novo pathway; XMP from IMP: step 1/1. With respect to regulation, mycophenolic acid (MPA) is a non-competitive inhibitor that prevents formation of the closed enzyme conformation by binding to the same site as the amobile flap. In contrast, mizoribine monophosphate (MZP) is a competitive inhibitor that induces the closed conformation. MPA is a potent inhibitor of mammalian IMPDHs but a poor inhibitor of the bacterial enzymes. MZP is a more potent inhibitor of bacterial IMPDH. Potently inhibited by MPA and adenine dinucleotide analogs such as thiazole-4-carboxamide adenine dinucleotide (TAD). In terms of biological role, catalyzes the conversion of inosine 5'-phosphate (IMP) to xanthosine 5'-phosphate (XMP), the first committed and rate-limiting step in the de novo synthesis of guanine nucleotides, and therefore plays an important role in the regulation of cell growth. The sequence is that of Inosine-5'-monophosphate dehydrogenase from Toxoplasma gondii.